The following is a 377-amino-acid chain: tRNA-queuosine alpha-mannosyltransferase (377 aa).

This sequence belongs to the glycosyltransferase group 1 family. Glycosyltransferase 4 subfamily.

The enzyme catalyses queuosine(34) in tRNA(Asp) + GDP-alpha-D-mannose = O-4''-alpha-D-mannosylqueuosine(34) in tRNA(Asp) + GDP + H(+). Functionally, glycosyltransferase that specifically catalyzes mannosylation of cytoplasmic tRNA(Asp) modified with queuosine at position 34 (queuosine(34)). Mannosylates the cyclopentene moiety of queuosine(34) in tRNA(Asp) to form mannosyl-queuosine(34). This is tRNA-queuosine alpha-mannosyltransferase from Drosophila melanogaster (Fruit fly).